Consider the following 152-residue polypeptide: Transcriptional regulator MraZ (152 aa).

SpoVT-AbrB domains are found at residues 5 to 52 (ASAI…PADE) and 81 to 124 (AHEI…DEAQ).

Belongs to the MraZ family. Forms oligomers.

Its subcellular location is the cytoplasm. The protein localises to the nucleoid. This Shewanella amazonensis (strain ATCC BAA-1098 / SB2B) protein is Transcriptional regulator MraZ.